Reading from the N-terminus, the 81-residue chain is U-poneritoxin(01)-Om6a (81 aa).

A signal peptide spans 1 to 21; the sequence is MRRSYVLLAFAIVLIISIISA. The propeptide occupies 22–43; it reads QVEADASSDAFADAVADAVADP. Position 79 is an alanine amide (Ala79).

The protein belongs to the formicidae venom precursor-01 superfamily. Post-translationally, truncated sequences of this peptide have also been found in the venom. It is possible they have been cleaved in the venom. Expressed by the venom gland.

It localises to the secreted. In terms of biological role, cationic amphipathic alpha-helical peptide with antimicrobial activities against E.coli (MIC=3.1), and S.aureus (MIC=3.1 uM). Also shows histamine-releasing activity (33.6% at 10 uM). Does not have activity against S.cerevisiae. Does not show hemolytic activity, even at 50 uM. This is U-poneritoxin(01)-Om6a from Odontomachus monticola (Trap-jaw ant).